Consider the following 374-residue polypeptide: Peptide chain release factor 2 (374 aa).

The residue at position 248 (Q248) is an N5-methylglutamine.

It belongs to the prokaryotic/mitochondrial release factor family. Methylated by PrmC. Methylation increases the termination efficiency of RF2.

It localises to the cytoplasm. Peptide chain release factor 2 directs the termination of translation in response to the peptide chain termination codons UGA and UAA. In Thermomicrobium roseum (strain ATCC 27502 / DSM 5159 / P-2), this protein is Peptide chain release factor 2.